A 419-amino-acid polypeptide reads, in one-letter code: Multifunctional CCA protein (419 aa).

ATP-binding residues include glycine 8 and arginine 11. Residues glycine 8 and arginine 11 each coordinate CTP. Aspartate 21 and aspartate 23 together coordinate Mg(2+). Positions 91, 141, and 144 each coordinate ATP. CTP-binding residues include arginine 91, arginine 141, and arginine 144. The HD domain maps to 230–331 (TGVHVMMVLD…VRLLERCDAL (102 aa)).

The protein belongs to the tRNA nucleotidyltransferase/poly(A) polymerase family. Bacterial CCA-adding enzyme type 1 subfamily. Monomer. Can also form homodimers and oligomers. It depends on Mg(2+) as a cofactor. The cofactor is Ni(2+).

It catalyses the reaction a tRNA precursor + 2 CTP + ATP = a tRNA with a 3' CCA end + 3 diphosphate. The enzyme catalyses a tRNA with a 3' CCA end + 2 CTP + ATP = a tRNA with a 3' CCACCA end + 3 diphosphate. Functionally, catalyzes the addition and repair of the essential 3'-terminal CCA sequence in tRNAs without using a nucleic acid template. Adds these three nucleotides in the order of C, C, and A to the tRNA nucleotide-73, using CTP and ATP as substrates and producing inorganic pyrophosphate. tRNA 3'-terminal CCA addition is required both for tRNA processing and repair. Also involved in tRNA surveillance by mediating tandem CCA addition to generate a CCACCA at the 3' terminus of unstable tRNAs. While stable tRNAs receive only 3'-terminal CCA, unstable tRNAs are marked with CCACCA and rapidly degraded. The sequence is that of Multifunctional CCA protein from Paracidovorax citrulli (strain AAC00-1) (Acidovorax citrulli).